The sequence spans 141 residues: Large ribosomal subunit protein uL11A (141 aa).

It belongs to the universal ribosomal protein uL11 family. As to quaternary structure, part of the ribosomal stalk of the 50S ribosomal subunit. Interacts with L10 and the large rRNA to form the base of the stalk. L10 forms an elongated spine to which L12 dimers bind in a sequential fashion forming a multimeric L10(L12)X complex. One or more lysine residues are methylated.

In terms of biological role, forms part of the ribosomal stalk which helps the ribosome interact with GTP-bound translation factors. The polypeptide is Large ribosomal subunit protein uL11A (Bacillus cereus (strain ATCC 14579 / DSM 31 / CCUG 7414 / JCM 2152 / NBRC 15305 / NCIMB 9373 / NCTC 2599 / NRRL B-3711)).